The sequence spans 335 residues: tRNA N6-adenosine threonylcarbamoyltransferase (335 aa).

Histidine 109, histidine 113, and tyrosine 130 together coordinate a divalent metal cation. Residues 130–134 (YVSGG), aspartate 162, glycine 177, glutamate 181, and asparagine 266 each bind substrate. Aspartate 294 serves as a coordination point for a divalent metal cation.

It belongs to the KAE1 / TsaD family. In terms of assembly, component of the EKC/KEOPS complex composed of at least tp53rk, tprkb, osgep and lage3; the whole complex dimerizes. A divalent metal cation is required as a cofactor.

The protein localises to the cytoplasm. It is found in the nucleus. It catalyses the reaction L-threonylcarbamoyladenylate + adenosine(37) in tRNA = N(6)-L-threonylcarbamoyladenosine(37) in tRNA + AMP + H(+). In terms of biological role, component of the EKC/KEOPS complex that is required for the formation of a threonylcarbamoyl group on adenosine at position 37 (t(6)A37) in tRNAs that read codons beginning with adenine. The complex is probably involved in the transfer of the threonylcarbamoyl moiety of threonylcarbamoyl-AMP (TC-AMP) to the N6 group of A37. OSGEP likely plays a direct catalytic role in this reaction, but requires other protein(s) of the complex to fulfill this activity. This Danio rerio (Zebrafish) protein is tRNA N6-adenosine threonylcarbamoyltransferase.